Here is an 85-residue protein sequence, read N- to C-terminus: U4-theraphotoxin-Hhn1a (85 aa).

The first 22 residues, 1 to 22 (MKVTLIVILTCAAVLVLHTTAA), serve as a signal peptide directing secretion. Positions 23–48 (EELEAESQLMEVGMPDTELAAVDEER) are excised as a propeptide. Disulfide bonds link Cys-52–Cys-66, Cys-56–Cys-77, and Cys-71–Cys-82.

Belongs to the neurotoxin 12 (Hwtx-2) family. 02 (Hwtx-2) subfamily. In terms of assembly, monomer. As to expression, expressed by the venom gland.

Its subcellular location is the secreted. Functionally, neurotoxin active on both insects and mammals. In Cyriopagopus hainanus (Chinese bird spider), this protein is U4-theraphotoxin-Hhn1a.